The primary structure comprises 228 residues: MAKDTTGRLHVQVKTGGKRKLSSKLWLERQLNDPYVAKAKAAGYRSRAAFKLLEIDDKFRLLKHGMAVVDLGAAPGGWSQIAAKRVGSVDGKGKVVAIDLLEMPEIAGVEFAQLDFMDNDAPAKLTAMLGGGADVVMSDMAANTTGHRKTDQLRIVGLIETAAAFACDVLKPGGTFLAKTFQSGADADLLAQLKRDFATVRHVKPAASRQDSSERYVLATGFRGGAKA.

5 residues coordinate S-adenosyl-L-methionine: Gly-76, Trp-78, Asp-99, Asp-115, and Asp-139. The active-site Proton acceptor is the Lys-179.

This sequence belongs to the class I-like SAM-binding methyltransferase superfamily. RNA methyltransferase RlmE family.

It is found in the cytoplasm. The enzyme catalyses uridine(2552) in 23S rRNA + S-adenosyl-L-methionine = 2'-O-methyluridine(2552) in 23S rRNA + S-adenosyl-L-homocysteine + H(+). Its function is as follows. Specifically methylates the uridine in position 2552 of 23S rRNA at the 2'-O position of the ribose in the fully assembled 50S ribosomal subunit. The sequence is that of Ribosomal RNA large subunit methyltransferase E from Bradyrhizobium diazoefficiens (strain JCM 10833 / BCRC 13528 / IAM 13628 / NBRC 14792 / USDA 110).